The following is a 364-amino-acid chain: DNA replication and repair protein RecF (364 aa).

23-30 (GPNGIGKS) is an ATP binding site.

The protein belongs to the RecF family.

Its subcellular location is the cytoplasm. The RecF protein is involved in DNA metabolism; it is required for DNA replication and normal SOS inducibility. RecF binds preferentially to single-stranded, linear DNA. It also seems to bind ATP. This is DNA replication and repair protein RecF from Synechococcus sp. (strain CC9605).